The sequence spans 388 residues: MEHFYRDTWVEVDLDAIEQNVTNALRLYKDREMNLMAVVKANGYGHGAVEVSQAALRAGASYLSVAFLDEALALRKAGIDAPILVMGLVGAEHVQLAIKHRITLTVYQLDWLEQAISRLHTRDKLAIHLKLDTGMGRIGLRRKEDIRSCMDFIASHECFELEGVFTHFATADEKDLTYFKKQCQRFNQWLEYIREWQLPIRYVHCGNSAAGLRFPEKNFNMFRFGIAMYGLTPSPEITDELPFPLKQAFSLKSRLSNVKKLPKGEGISYGATYVTEGAEWIGTLPIGYADGWIRHHSNAGGHVLIDGKRAPFVGRICMDQCMIRLPKKHSIGDTVTLIGESDGKQITMDEVAKRLNTINYEIPCVISWRVPRIYFRDGQIISVKNNLL.

The active-site Proton acceptor; specific for D-alanine is Lys-40. Residue Lys-40 is modified to N6-(pyridoxal phosphate)lysine. Arg-137 lines the substrate pocket. The Proton acceptor; specific for L-alanine role is filled by Tyr-269. Met-318 is a substrate binding site.

Belongs to the alanine racemase family. It depends on pyridoxal 5'-phosphate as a cofactor.

The enzyme catalyses L-alanine = D-alanine. Its pathway is amino-acid biosynthesis; D-alanine biosynthesis; D-alanine from L-alanine: step 1/1. Its function is as follows. Catalyzes the interconversion of L-alanine and D-alanine. May also act on other amino acids. This Halalkalibacterium halodurans (strain ATCC BAA-125 / DSM 18197 / FERM 7344 / JCM 9153 / C-125) (Bacillus halodurans) protein is Alanine racemase (alr).